Here is a 451-residue protein sequence, read N- to C-terminus: Phosphoglucosamine mutase (451 aa).

S102 (phosphoserine intermediate) is an active-site residue. Mg(2+) is bound by residues S102, D243, D245, and D247. The residue at position 102 (S102) is a Phosphoserine.

This sequence belongs to the phosphohexose mutase family. The cofactor is Mg(2+). In terms of processing, activated by phosphorylation.

It carries out the reaction alpha-D-glucosamine 1-phosphate = D-glucosamine 6-phosphate. In terms of biological role, catalyzes the conversion of glucosamine-6-phosphate to glucosamine-1-phosphate. In Sinorhizobium medicae (strain WSM419) (Ensifer medicae), this protein is Phosphoglucosamine mutase.